Reading from the N-terminus, the 385-residue chain is Flap endonuclease 1 (385 aa).

The tract at residues 1 to 104 (MGILGLSKLI…GELAKRAERR (104 aa)) is N-domain. D34 is a Mg(2+) binding site. Positions 47 and 70 each coordinate DNA. Mg(2+) contacts are provided by D86, E158, E160, D179, and D181. The tract at residues 122–253 (GIEKFNRRLV…KRAIELINTY (132 aa)) is I-domain. E158 is a binding site for DNA. DNA contacts are provided by G231 and D233. D233 provides a ligand contact to Mg(2+). Residues 336–344 (TQVRLDSFF) form an interaction with PCNA region. The interval 346-385 (TLPSTPNATNAAKRKADEAKKSANNKKAKTSGGGRGRRPK) is disordered. A compositionally biased stretch (basic residues) spans 368–385 (ANNKKAKTSGGGRGRRPK).

It belongs to the XPG/RAD2 endonuclease family. FEN1 subfamily. In terms of assembly, interacts with PCNA. Three molecules of FEN1 bind to one PCNA trimer with each molecule binding to one PCNA monomer. PCNA stimulates the nuclease activity without altering cleavage specificity. Mg(2+) serves as cofactor. Phosphorylated. Phosphorylation upon DNA damage induces relocalization to the nuclear plasma.

Its subcellular location is the nucleus. The protein resides in the nucleolus. It is found in the nucleoplasm. It localises to the mitochondrion. Structure-specific nuclease with 5'-flap endonuclease and 5'-3' exonuclease activities involved in DNA replication and repair. During DNA replication, cleaves the 5'-overhanging flap structure that is generated by displacement synthesis when DNA polymerase encounters the 5'-end of a downstream Okazaki fragment. It enters the flap from the 5'-end and then tracks to cleave the flap base, leaving a nick for ligation. Also involved in the long patch base excision repair (LP-BER) pathway, by cleaving within the apurinic/apyrimidinic (AP) site-terminated flap. Acts as a genome stabilization factor that prevents flaps from equilibrating into structures that lead to duplications and deletions. Also possesses 5'-3' exonuclease activity on nicked or gapped double-stranded DNA, and exhibits RNase H activity. Also involved in replication and repair of rDNA and in repairing mitochondrial DNA. In Drosophila sechellia (Fruit fly), this protein is Flap endonuclease 1.